Reading from the N-terminus, the 251-residue chain is MENIITSKDVHLSYGNVEALHGISLDFEEKELTALIGPSGCGKSTFLRCLNRMNDDIPNIHISGEIKFENKNIYGPKMDLVELRKDVGMVFQQPSPFPFSVYDNIAYGLRIAGIKDKELIDQRVEESLKQAAIWKETKDNLDRNAQAFSGGQQQRICIARALAVRPKVVLLDEPTSALDPISSSEIEETLLELKHDFTFIMVTHNLQQASRISDYTAFLMSGDLIEYGKTSDMFMNPKKQITSDYLNGRFG.

An ABC transporter domain is found at 5 to 246 (ITSKDVHLSY…PKKQITSDYL (242 aa)). 37-44 (GPSGCGKS) provides a ligand contact to ATP.

This sequence belongs to the ABC transporter superfamily. Phosphate importer (TC 3.A.1.7) family. The complex is composed of two ATP-binding proteins (PstB), two transmembrane proteins (PstC and PstA) and a solute-binding protein (PstS).

It is found in the cell membrane. The catalysed reaction is phosphate(out) + ATP + H2O = ADP + 2 phosphate(in) + H(+). Part of the ABC transporter complex PstSACB involved in phosphate import. Responsible for energy coupling to the transport system. This is Phosphate import ATP-binding protein PstB 2 from Lactobacillus johnsonii (strain CNCM I-12250 / La1 / NCC 533).